Reading from the N-terminus, the 405-residue chain is Riboflavin biosynthesis protein RibBA (405 aa).

The segment at 1-205 (MEQIKLDSIA…IKDLIEYRLT (205 aa)) is DHBP synthase. Residues 30 to 31 (RE), Asp-35, 144 to 148 (RVGHT), and Glu-168 contribute to the D-ribulose 5-phosphate site. Glu-31 contributes to the Mg(2+) binding site. His-147 contributes to the Mg(2+) binding site. The GTP cyclohydrolase II stretch occupies residues 206-405 (HESLVKREIG…KMGHTILKKD (200 aa)). 256 to 260 (RVHSS) is a binding site for GTP. Zn(2+) contacts are provided by Cys-261, Cys-272, and Cys-274. Residues Gln-277, 299-301 (EGR), and Thr-321 each bind GTP. Asp-333 serves as the catalytic Proton acceptor; for GTP cyclohydrolase activity. Catalysis depends on Arg-335, which acts as the Nucleophile; for GTP cyclohydrolase activity. The GTP site is built by Thr-356 and Lys-361.

It in the N-terminal section; belongs to the DHBP synthase family. In the C-terminal section; belongs to the GTP cyclohydrolase II family. Mg(2+) serves as cofactor. The cofactor is Mn(2+). Zn(2+) is required as a cofactor.

It carries out the reaction D-ribulose 5-phosphate = (2S)-2-hydroxy-3-oxobutyl phosphate + formate + H(+). It catalyses the reaction GTP + 4 H2O = 2,5-diamino-6-hydroxy-4-(5-phosphoribosylamino)-pyrimidine + formate + 2 phosphate + 3 H(+). The protein operates within cofactor biosynthesis; riboflavin biosynthesis; 2-hydroxy-3-oxobutyl phosphate from D-ribulose 5-phosphate: step 1/1. It participates in cofactor biosynthesis; riboflavin biosynthesis; 5-amino-6-(D-ribitylamino)uracil from GTP: step 1/4. Catalyzes the conversion of D-ribulose 5-phosphate to formate and 3,4-dihydroxy-2-butanone 4-phosphate. Functionally, catalyzes the conversion of GTP to 2,5-diamino-6-ribosylamino-4(3H)-pyrimidinone 5'-phosphate (DARP), formate and pyrophosphate. This Cytophaga hutchinsonii (strain ATCC 33406 / DSM 1761 / CIP 103989 / NBRC 15051 / NCIMB 9469 / D465) protein is Riboflavin biosynthesis protein RibBA.